The primary structure comprises 203 residues: Holliday junction branch migration complex subunit RuvA (203 aa).

A domain I region spans residues 1 to 65 (MIAYIHGKLL…EDAFDLYGFP (65 aa)). Residues 66 to 144 (CFDDREVFRT…TLKSATVRSG (79 aa)) form a domain II region. The tract at residues 145–155 (ACPVEGDRSEF) is flexible linker. The segment at 155–203 (FLDALSGLRNLGYGDDEVRDFLKDIFDEEPDLDAGGAIRVALKKISQNK) is domain III.

The protein belongs to the RuvA family. Homotetramer. Forms an RuvA(8)-RuvB(12)-Holliday junction (HJ) complex. HJ DNA is sandwiched between 2 RuvA tetramers; dsDNA enters through RuvA and exits via RuvB. An RuvB hexamer assembles on each DNA strand where it exits the tetramer. Each RuvB hexamer is contacted by two RuvA subunits (via domain III) on 2 adjacent RuvB subunits; this complex drives branch migration. In the full resolvosome a probable DNA-RuvA(4)-RuvB(12)-RuvC(2) complex forms which resolves the HJ.

Its subcellular location is the cytoplasm. Functionally, the RuvA-RuvB-RuvC complex processes Holliday junction (HJ) DNA during genetic recombination and DNA repair, while the RuvA-RuvB complex plays an important role in the rescue of blocked DNA replication forks via replication fork reversal (RFR). RuvA specifically binds to HJ cruciform DNA, conferring on it an open structure. The RuvB hexamer acts as an ATP-dependent pump, pulling dsDNA into and through the RuvAB complex. HJ branch migration allows RuvC to scan DNA until it finds its consensus sequence, where it cleaves and resolves the cruciform DNA. In Maridesulfovibrio salexigens (strain ATCC 14822 / DSM 2638 / NCIMB 8403 / VKM B-1763) (Desulfovibrio salexigens), this protein is Holliday junction branch migration complex subunit RuvA.